A 324-amino-acid chain; its full sequence is IDS-like terpene synthase 2 (324 aa).

Residues Asp-77 and Asp-81 each contribute to the Mg(2+) site.

It belongs to the FPP/GGPP synthase family. The cofactor is Mg(2+).

It carries out the reaction (2E)-geranyl diphosphate = (E)-beta-ocimene + diphosphate. The catalysed reaction is (2E,6E)-farnesyl diphosphate = (3E,6E)-alpha-farnesene + diphosphate. The enzyme catalyses (2E,6E,10E)-geranylgeranyl diphosphate = (E,E,E)-alpha-springene + diphosphate. Functionally, terpene synthase that shows monoterpene synthase activity and produces (E)-beta-ocimene as a major product, using geranyl diphosphate (GPP) as substrate. Also shows sesquiterpene synthase activity as it is able to convert farnesyl diphosphate (FPP) into (E,E)-alpha-farnesene. Finally, TPS2 can convert geranylgeranyl diphosphate into (E,E,E)-alpha-springene. This chain is IDS-like terpene synthase 2, found in Melampsora lini (Rust fungus).